A 356-amino-acid chain; its full sequence is Cyclin-dependent kinase 5 activator 1 (356 aa).

Disordered stretches follow at residues 1 to 53 (MGAN…AKES) and 66 to 99 (IQPV…FTRN). Composition is skewed to low complexity over residues 40–49 (SNTSSRSSSN) and 71–92 (SRRS…SSDS).

The protein belongs to the cyclin-dependent kinase 5 activator family. Heterodimer composed of a catalytic subunit cdk-5 and a regulatory subunit cdka-1. Interaction with cdka-1 is required for cdk-5 activation. Expressed in all classes of neurons in the ventral cord.

The protein resides in the cytoplasm. It localises to the cell projection. The protein localises to the dendrite. It is found in the axon. Its function is as follows. Activator of the kinase cdk-5. In several motor neurons, promotes the polarized trafficking of synaptic vesicles and dense-core vesicles. In the ventral nerve cord, regulates the synaptic localization of the glutamate receptor, glr-1. In DA motor neurons, regulates axonal transport of synaptic vesicle precursors by inhibiting dynein-mediated retrograde transport. Regulates the polarized distribution of dense-core vesicles in DB motor neurons. May regulate these processes in association with cdk-5. May also play a role in GABAergic synaptic vesicle localization in the ventral nerve cord. This Caenorhabditis elegans protein is Cyclin-dependent kinase 5 activator 1.